The sequence spans 567 residues: Dynein, 70 kDa intermediate chain, flagellar outer arm (567 aa).

4 WD repeats span residues 214–254 (VPTS…GPVE), 261–302 (SHRD…ECVE), 360–399 (GHHG…KTPI), and 404–444 (YHPT…NEPT).

This sequence belongs to the dynein intermediate chain family. In terms of assembly, consists of at least 3 heavy chains (alpha, beta and gamma), 2 intermediate chains and 8 light chains.

It is found in the cytoplasm. Its subcellular location is the cytoskeleton. The protein resides in the flagellum axoneme. May play a role in regulating dynein heavy chain (DHC) activity. May function in holding IC78 to the DHC, or in stabilizing the entire dynein complex. The chain is Dynein, 70 kDa intermediate chain, flagellar outer arm (ODA6) from Chlamydomonas reinhardtii (Chlamydomonas smithii).